Here is a 221-residue protein sequence, read N- to C-terminus: Uracil-DNA glycosylase 1 (221 aa).

The active-site Proton acceptor is D61.

The protein belongs to the uracil-DNA glycosylase (UDG) superfamily. UNG family.

Its subcellular location is the cytoplasm. The catalysed reaction is Hydrolyzes single-stranded DNA or mismatched double-stranded DNA and polynucleotides, releasing free uracil.. Functionally, excises uracil residues from the DNA which can arise as a result of misincorporation of dUMP residues by DNA polymerase or due to deamination of cytosine. The sequence is that of Uracil-DNA glycosylase 1 from Listeria monocytogenes serotype 4b (strain F2365).